Here is a 416-residue protein sequence, read N- to C-terminus: Homeobox protein ceh-62 (416 aa).

A compositionally biased stretch (low complexity) spans 103–113 (TPTPIIATPSI). 2 disordered regions span residues 103-144 (TPTP…QATR) and 178-247 (FQNR…FPPT). Over residues 118 to 127 (QPLQSPSAPN) the composition is skewed to polar residues. The homeobox DNA-binding region spans 130–189 (SRRKRTTFSPEQATRLEAEYIGDSYMAREKRHLLAQSLKLSENQVKTWFQNRRAKDKRDR). Low complexity predominate over residues 193 to 218 (NASNHTSNSRRSSPSRKSSSDSTPTP). Over residues 219–240 (TQATQFDMPTQIQTASPPTTAD) the composition is skewed to polar residues.

The protein localises to the nucleus. This is Homeobox protein ceh-62 from Caenorhabditis elegans.